The sequence spans 142 residues: Hemoglobin subunit alpha (142 aa).

The Globin domain maps to 2-142 (VLSPADKTNV…VSTVLTSKYR (141 aa)). Serine 4 is subject to Phosphoserine. Lysine 8 is subject to N6-succinyllysine. The residue at position 9 (threonine 9) is a Phosphothreonine. Lysine 12 bears the N6-succinyllysine mark. Position 17 is an N6-acetyllysine; alternate (lysine 17). Lysine 17 bears the N6-succinyllysine; alternate mark. Tyrosine 25 is subject to Phosphotyrosine. Serine 36 is subject to Phosphoserine. An N6-succinyllysine modification is found at lysine 41. The residue at position 50 (serine 50) is a Phosphoserine. Residue histidine 59 coordinates O2. Histidine 88 serves as a coordination point for heme b. Serine 103 bears the Phosphoserine mark. A Phosphothreonine modification is found at threonine 109. Serine 125 and serine 132 each carry phosphoserine. Threonine 135 and threonine 138 each carry phosphothreonine. At serine 139 the chain carries Phosphoserine.

This sequence belongs to the globin family. As to quaternary structure, heterotetramer of two alpha chains and two beta chains. As to expression, red blood cells.

In terms of biological role, involved in oxygen transport from the lung to the various peripheral tissues. Hemopressin acts as an antagonist peptide of the cannabinoid receptor CNR1. Hemopressin-binding efficiently blocks cannabinoid receptor CNR1 and subsequent signaling. The chain is Hemoglobin subunit alpha (HBA) from Sapajus apella (Brown-capped capuchin).